A 101-amino-acid chain; its full sequence is Alkene monooxygenase system, effector subunit (101 aa).

Belongs to the TmoD/XamoD family. Monomer. The alkene monooxygenase multicomponent enzyme system is composed of an electron transfer component and a monooxygenase component interacting with the effector protein XamoD. The electron transfer component is composed of a ferredoxin reductase (XamoF) and a ferredoxin (XamoC), and the monooxygenase component is formed by a heterohexamer (dimer of heterotrimers) of two alpha subunits (XamoA), two beta subunits (XamoE) and two gamma subunits (XamoB).

Its subcellular location is the cytoplasm. Functionally, effector component of the alkene monooxygenase multicomponent enzyme system which catalyzes the O2- and NADH-dependent epoxidation of short chain (C2 to C6) alkenes to their corresponding epoxides. One possible role of this small protein might be to facilitate electron transfer between the reductase and ferredoxin components. The polypeptide is Alkene monooxygenase system, effector subunit (Xanthobacter autotrophicus (strain ATCC BAA-1158 / Py2)).